The sequence spans 497 residues: Alkane hydroxylase MAH1 (497 aa).

A helical membrane pass occupies residues 3-23 (MLGFYVTFIFFLVCLFTYFFL). Position 444 (Cys444) interacts with heme.

Belongs to the cytochrome P450 family. Heme serves as cofactor. As to expression, expressed in the expanding regions of the inflorescence stems, specifically to the epidermal pavement cells, petioles and siliques.

Its subcellular location is the endoplasmic reticulum membrane. In terms of biological role, involved in the formation of secondary alcohols and ketones in stem cuticular wax. Catalyzes the hydroxylation of a methylene unit in the middle of alkane molecules to form secondary alcohols and possibly also a second hydroxylation leading to the corresponding ketones. This is Alkane hydroxylase MAH1 from Arabidopsis thaliana (Mouse-ear cress).